A 516-amino-acid polypeptide reads, in one-letter code: GMP synthase [glutamine-hydrolyzing] (516 aa).

The Glutamine amidotransferase type-1 domain maps to 8-198 (KILILDFGSQ…VVNICGCDTL (191 aa)). Residue Cys-84 is the Nucleophile of the active site. Residues His-172 and Glu-174 contribute to the active site. In terms of domain architecture, GMPS ATP-PPase spans 199–391 (WNIENIIEND…LGLPYNMLYR (193 aa)). ATP is bound at residue 226-232 (SGGVDSS).

Homodimer.

The catalysed reaction is XMP + L-glutamine + ATP + H2O = GMP + L-glutamate + AMP + diphosphate + 2 H(+). It participates in purine metabolism; GMP biosynthesis; GMP from XMP (L-Gln route): step 1/1. In terms of biological role, catalyzes the synthesis of GMP from XMP. The polypeptide is GMP synthase [glutamine-hydrolyzing] (Francisella tularensis subsp. tularensis (strain FSC 198)).